A 98-amino-acid polypeptide reads, in one-letter code: NADH-ubiquinone oxidoreductase chain 4L (98 aa).

Transmembrane regions (helical) follow at residues 1–21, 36–56, and 61–81; these read MVLI…GVLI, MMLS…MFSI, and LILL…LVTI.

This sequence belongs to the complex I subunit 4L family. As to quaternary structure, core subunit of respiratory chain NADH dehydrogenase (Complex I) which is composed of 45 different subunits.

The protein localises to the mitochondrion inner membrane. The enzyme catalyses a ubiquinone + NADH + 5 H(+)(in) = a ubiquinol + NAD(+) + 4 H(+)(out). In terms of biological role, core subunit of the mitochondrial membrane respiratory chain NADH dehydrogenase (Complex I) which catalyzes electron transfer from NADH through the respiratory chain, using ubiquinone as an electron acceptor. Part of the enzyme membrane arm which is embedded in the lipid bilayer and involved in proton translocation. This Metachirus nudicaudatus (Brown four-eyed opossum) protein is NADH-ubiquinone oxidoreductase chain 4L (MT-ND4L).